The chain runs to 121 residues: Small ribosomal subunit protein uS13 (121 aa).

The segment at 94 to 121 (GLPVRGQKTRNNAHTVKGKPKAIAGKKK) is disordered. Residues 109-121 (VKGKPKAIAGKKK) show a composition bias toward basic residues.

This sequence belongs to the universal ribosomal protein uS13 family. In terms of assembly, part of the 30S ribosomal subunit. Forms a loose heterodimer with protein S19. Forms two bridges to the 50S subunit in the 70S ribosome.

Functionally, located at the top of the head of the 30S subunit, it contacts several helices of the 16S rRNA. In the 70S ribosome it contacts the 23S rRNA (bridge B1a) and protein L5 of the 50S subunit (bridge B1b), connecting the 2 subunits; these bridges are implicated in subunit movement. Contacts the tRNAs in the A and P-sites. The polypeptide is Small ribosomal subunit protein uS13 (Onion yellows phytoplasma (strain OY-M)).